A 375-amino-acid chain; its full sequence is Chaperone protein DnaJ (375 aa).

A J domain is found at 5–70; that stretch reads DYYELLGISR…EKRAAYDQYG (66 aa). Residues 132–210 form a CR-type zinc finger; that stretch reads GTTKDIKIHT…CHGDGRVNKA (79 aa). Zn(2+)-binding residues include Cys145, Cys148, Cys162, Cys165, Cys184, Cys187, Cys198, and Cys201. 4 CXXCXGXG motif repeats span residues 145 to 152, 162 to 169, 184 to 191, and 198 to 205; these read CDTCHGTG, CPHCHGAG, CHFCHGTG, and CKTCHGDG.

This sequence belongs to the DnaJ family. Homodimer. Zn(2+) serves as cofactor.

The protein resides in the cytoplasm. In terms of biological role, participates actively in the response to hyperosmotic and heat shock by preventing the aggregation of stress-denatured proteins and by disaggregating proteins, also in an autonomous, DnaK-independent fashion. Unfolded proteins bind initially to DnaJ; upon interaction with the DnaJ-bound protein, DnaK hydrolyzes its bound ATP, resulting in the formation of a stable complex. GrpE releases ADP from DnaK; ATP binding to DnaK triggers the release of the substrate protein, thus completing the reaction cycle. Several rounds of ATP-dependent interactions between DnaJ, DnaK and GrpE are required for fully efficient folding. Also involved, together with DnaK and GrpE, in the DNA replication of plasmids through activation of initiation proteins. This chain is Chaperone protein DnaJ, found in Aggregatibacter actinomycetemcomitans (Actinobacillus actinomycetemcomitans).